A 39-amino-acid chain; its full sequence is Photosystem II reaction center protein L (39 aa).

A helical membrane pass occupies residues 18–38; the sequence is SLYLGLLLVFVLGILFSSYFF.

This sequence belongs to the PsbL family. As to quaternary structure, PSII is composed of 1 copy each of membrane proteins PsbA, PsbB, PsbC, PsbD, PsbE, PsbF, PsbH, PsbI, PsbJ, PsbK, PsbL, PsbM, PsbT, PsbX, PsbY, PsbZ, Psb30/Ycf12, peripheral proteins PsbO, CyanoQ (PsbQ), PsbU, PsbV and a large number of cofactors. It forms dimeric complexes.

It is found in the cellular thylakoid membrane. In terms of biological role, one of the components of the core complex of photosystem II (PSII). PSII is a light-driven water:plastoquinone oxidoreductase that uses light energy to abstract electrons from H(2)O, generating O(2) and a proton gradient subsequently used for ATP formation. It consists of a core antenna complex that captures photons, and an electron transfer chain that converts photonic excitation into a charge separation. This subunit is found at the monomer-monomer interface and is required for correct PSII assembly and/or dimerization. The chain is Photosystem II reaction center protein L from Trichormus variabilis (strain ATCC 29413 / PCC 7937) (Anabaena variabilis).